The sequence spans 196 residues: dITP/XTP pyrophosphatase (196 aa).

Position 10–15 (10–15 (TTNPHK)) interacts with substrate. Residue Asp68 is the Proton acceptor of the active site. Mg(2+) is bound at residue Asp68. Substrate-binding positions include Ser69, 148 to 151 (FGYD), and 175 to 176 (HR).

This sequence belongs to the HAM1 NTPase family. Homodimer. Mg(2+) serves as cofactor.

The enzyme catalyses XTP + H2O = XMP + diphosphate + H(+). It catalyses the reaction dITP + H2O = dIMP + diphosphate + H(+). The catalysed reaction is ITP + H2O = IMP + diphosphate + H(+). Pyrophosphatase that catalyzes the hydrolysis of nucleoside triphosphates to their monophosphate derivatives, with a high preference for the non-canonical purine nucleotides XTP (xanthosine triphosphate), dITP (deoxyinosine triphosphate) and ITP. Seems to function as a house-cleaning enzyme that removes non-canonical purine nucleotides from the nucleotide pool, thus preventing their incorporation into DNA/RNA and avoiding chromosomal lesions. In Thermotoga maritima (strain ATCC 43589 / DSM 3109 / JCM 10099 / NBRC 100826 / MSB8), this protein is dITP/XTP pyrophosphatase.